Here is an 88-residue protein sequence, read N- to C-terminus: Small ribosomal subunit protein uS15 (88 aa).

It belongs to the universal ribosomal protein uS15 family. In terms of assembly, part of the 30S ribosomal subunit. Forms a bridge to the 50S subunit in the 70S ribosome, contacting the 23S rRNA.

Functionally, one of the primary rRNA binding proteins, it binds directly to 16S rRNA where it helps nucleate assembly of the platform of the 30S subunit by binding and bridging several RNA helices of the 16S rRNA. Forms an intersubunit bridge (bridge B4) with the 23S rRNA of the 50S subunit in the ribosome. The protein is Small ribosomal subunit protein uS15 of Mycoplasmopsis agalactiae (strain NCTC 10123 / CIP 59.7 / PG2) (Mycoplasma agalactiae).